The primary structure comprises 205 residues: MEINYELYLITDRRFLKGRQLKKVVEDAILGGVTIVQVREKDVSTKEFYNVAKEVKEVTDYYRVPIIINDRLDIAQAIDANGVHLGQKDMHLNIAREILGKDKIIGISVGNVKEALEAQNNGADYLGIGTIFPTGSKKDVDAIIGIDGLSKIKDSISIPSVAIGGINKTNFKDVLKTGIEGISVISAILDEDDIKLAANNLLINK.

Residues 37–41 and Asn-69 contribute to the 4-amino-2-methyl-5-(diphosphooxymethyl)pyrimidine site; that span reads QVREK. The Mg(2+) site is built by Asp-70 and Asp-89. Ser-108 serves as a coordination point for 4-amino-2-methyl-5-(diphosphooxymethyl)pyrimidine. 134-136 contributes to the 2-[(2R,5Z)-2-carboxy-4-methylthiazol-5(2H)-ylidene]ethyl phosphate binding site; that stretch reads TGS. Position 137 (Lys-137) interacts with 4-amino-2-methyl-5-(diphosphooxymethyl)pyrimidine. 2-[(2R,5Z)-2-carboxy-4-methylthiazol-5(2H)-ylidene]ethyl phosphate is bound by residues Gly-165 and 185 to 186; that span reads IS.

The protein belongs to the thiamine-phosphate synthase family. Mg(2+) is required as a cofactor.

The enzyme catalyses 2-[(2R,5Z)-2-carboxy-4-methylthiazol-5(2H)-ylidene]ethyl phosphate + 4-amino-2-methyl-5-(diphosphooxymethyl)pyrimidine + 2 H(+) = thiamine phosphate + CO2 + diphosphate. It carries out the reaction 2-(2-carboxy-4-methylthiazol-5-yl)ethyl phosphate + 4-amino-2-methyl-5-(diphosphooxymethyl)pyrimidine + 2 H(+) = thiamine phosphate + CO2 + diphosphate. It catalyses the reaction 4-methyl-5-(2-phosphooxyethyl)-thiazole + 4-amino-2-methyl-5-(diphosphooxymethyl)pyrimidine + H(+) = thiamine phosphate + diphosphate. Its pathway is cofactor biosynthesis; thiamine diphosphate biosynthesis; thiamine phosphate from 4-amino-2-methyl-5-diphosphomethylpyrimidine and 4-methyl-5-(2-phosphoethyl)-thiazole: step 1/1. Condenses 4-methyl-5-(beta-hydroxyethyl)thiazole monophosphate (THZ-P) and 2-methyl-4-amino-5-hydroxymethyl pyrimidine pyrophosphate (HMP-PP) to form thiamine monophosphate (TMP). The polypeptide is Thiamine-phosphate synthase (Clostridium botulinum (strain 657 / Type Ba4)).